We begin with the raw amino-acid sequence, 142 residues long: Nucleoside diphosphate kinase (142 aa).

Lys-11, Phe-59, Arg-87, Thr-93, Arg-104, and Asn-114 together coordinate ATP. The active-site Pros-phosphohistidine intermediate is the His-117.

The protein belongs to the NDK family. Homotetramer. It depends on Mg(2+) as a cofactor.

Its subcellular location is the cytoplasm. It catalyses the reaction a 2'-deoxyribonucleoside 5'-diphosphate + ATP = a 2'-deoxyribonucleoside 5'-triphosphate + ADP. The enzyme catalyses a ribonucleoside 5'-diphosphate + ATP = a ribonucleoside 5'-triphosphate + ADP. Major role in the synthesis of nucleoside triphosphates other than ATP. The ATP gamma phosphate is transferred to the NDP beta phosphate via a ping-pong mechanism, using a phosphorylated active-site intermediate. In Yersinia pestis bv. Antiqua (strain Antiqua), this protein is Nucleoside diphosphate kinase.